A 190-amino-acid polypeptide reads, in one-letter code: Ribose 1,5-bisphosphate phosphokinase PhnN (190 aa).

19–26 provides a ligand contact to ATP; it reads GPSGVGKD.

This sequence belongs to the ribose 1,5-bisphosphokinase family.

The catalysed reaction is alpha-D-ribose 1,5-bisphosphate + ATP = 5-phospho-alpha-D-ribose 1-diphosphate + ADP. It functions in the pathway metabolic intermediate biosynthesis; 5-phospho-alpha-D-ribose 1-diphosphate biosynthesis; 5-phospho-alpha-D-ribose 1-diphosphate from D-ribose 5-phosphate (route II): step 3/3. In terms of biological role, catalyzes the phosphorylation of ribose 1,5-bisphosphate to 5-phospho-D-ribosyl alpha-1-diphosphate (PRPP). The sequence is that of Ribose 1,5-bisphosphate phosphokinase PhnN from Ruegeria sp. (strain TM1040) (Silicibacter sp.).